The primary structure comprises 192 residues: Small ribosomal subunit protein eS7 (192 aa).

The protein belongs to the eukaryotic ribosomal protein eS7 family.

The chain is Small ribosomal subunit protein eS7 (RpS7) from Culex quinquefasciatus (Southern house mosquito).